Reading from the N-terminus, the 497-residue chain is Serine/arginine-rich protein PSR (497 aa).

Residues 1 to 19 (MYSRCIALVFVGLLASSLA) form the signal peptide. Residues 20 to 366 (ANCYGPAGKL…HHGLSSQKLG (347 aa)) lie on the Extracellular side of the membrane. N-linked (GlcNAc...) asparagine glycans are attached at residues Asn92, Asn193, Asn202, Asn261, and Asn283. The helical transmembrane segment at 367–387 (LAIGLPIAGVFLIILIAAAII) threads the bilayer. The Cytoplasmic segment spans residues 388–497 (YYRKRRESEK…ESASRDSDSD (110 aa)). Positions 424 to 450 (MGSKTMQAMLDMRDDDESEHDSDDGYG) are necessary for phosphorylation by PSRPK in vitro. A compositionally biased stretch (acidic residues) spans 436–447 (RDDDESEHDSDD). The interval 436–497 (RDDDESEHDS…ESASRDSDSD (62 aa)) is disordered. The span at 459-471 (GRSRSRSRSRSVS) shows a compositional bias: basic residues. The segment covering 476 to 497 (GSRDARSESDPGESASRDSDSD) has biased composition (basic and acidic residues).

Phosphorylated on serine residues in the RS domain by PSRPK.

Its subcellular location is the membrane. The protein is Serine/arginine-rich protein PSR of Physarum polycephalum (Slime mold).